A 110-amino-acid chain; its full sequence is Spermatid nuclear transition protein 3 (110 aa).

The interval 80–110 (RSCAREKLNQSRKRYQNMRQSQRRGQNQKRR) is disordered.

The protein localises to the nucleus. The protein resides in the chromosome. Its function is as follows. Involved in nuclear basic protein transition: histones are replaced by spermatid specific proteins which are themselves replaced by protamines in late spermatids. In Ovis aries (Sheep), this protein is Spermatid nuclear transition protein 3.